Consider the following 25-residue polypeptide: Toxin Tpa3 (25 aa).

This sequence belongs to the non-disulfide-bridged peptide (NDBP) superfamily. Expressed by the venom gland.

The protein resides in the secreted. Unknown. Is not toxic to mammals. The polypeptide is Toxin Tpa3 (Tityus pachyurus (Colombian scorpion)).